A 480-amino-acid chain; its full sequence is Protein nucleotidyltransferase YdiU (480 aa).

The ATP site is built by Gly-87, Gly-89, Arg-90, Lys-110, Asp-122, Gly-123, Arg-173, and Arg-180. Residue Asp-245 is the Proton acceptor of the active site. Residues Asn-246 and Asp-255 each contribute to the Mg(2+) site. An ATP-binding site is contributed by Asp-255.

The protein belongs to the SELO family. The cofactor is Mg(2+). Mn(2+) serves as cofactor.

The catalysed reaction is L-seryl-[protein] + ATP = 3-O-(5'-adenylyl)-L-seryl-[protein] + diphosphate. It carries out the reaction L-threonyl-[protein] + ATP = 3-O-(5'-adenylyl)-L-threonyl-[protein] + diphosphate. The enzyme catalyses L-tyrosyl-[protein] + ATP = O-(5'-adenylyl)-L-tyrosyl-[protein] + diphosphate. It catalyses the reaction L-histidyl-[protein] + UTP = N(tele)-(5'-uridylyl)-L-histidyl-[protein] + diphosphate. The catalysed reaction is L-seryl-[protein] + UTP = O-(5'-uridylyl)-L-seryl-[protein] + diphosphate. It carries out the reaction L-tyrosyl-[protein] + UTP = O-(5'-uridylyl)-L-tyrosyl-[protein] + diphosphate. Functionally, nucleotidyltransferase involved in the post-translational modification of proteins. It can catalyze the addition of adenosine monophosphate (AMP) or uridine monophosphate (UMP) to a protein, resulting in modifications known as AMPylation and UMPylation. In Jannaschia sp. (strain CCS1), this protein is Protein nucleotidyltransferase YdiU.